A 415-amino-acid polypeptide reads, in one-letter code: MAWASSFDAFFKNFKRESKIISEYDITLIMTYIEENKLQKAVSVIEKVLRDIESAPLHIAVTGETGAGKSTFINTLRGVGHEEKGAAPTGAIETTMKRTPYPHPKLPNVTIWDLPGIGTTNFTPQNYLTEMKFGEYDFFIIISATRFKENDAQLAKAIAQMGMNFYFVRTKIDSDLDNEQKFKPKSFNKEEVLKNIKDYCSNHLQESLDSEPPVFLVSNVDISKYDFPKLETKLLQDLPAHKRHVFSLSLQSLTEATINYKRDSLKQKVFLEAMKAGALATIPLGGMISDILENLDETFNLYRSYFGLDDASLENIAQDLNMSVDDFKVHLRFPHLFAEHNDESLEDKLFKYIKHISSVTGGPVAAVTYYRMAYYLQNLFLDTAANDAIALLNSKALFEKKVGPYISEPPEYWEA.

Residues 55-237 (APLHIAVTGE…PKLETKLLQD (183 aa)) enclose the IRG-type G domain. Positions 66, 68, 69, and 70 each coordinate GDP. Threonine 89 is subject to (Microbial infection) Phosphothreonine; by ROP17. 4 residues coordinate GDP: glycine 90, lysine 171, aspartate 173, and asparagine 219.

This sequence belongs to the TRAFAC class dynamin-like GTPase superfamily. IRG family. In terms of assembly, monomer, homodimer or homotetramer in the presence of GTP. Forms higher order homooligomers in GTP-dependent manner. As to quaternary structure, (Microbial infection) Interacts with Toxoplasma gondii ROP18. Post-translationally, (Microbial infection) Phosphorylated by Toxoplasma gondii ROP17; the phosphorylation leads to disassembly of IRGB6 (TGTP1/TGTP2) polymers into monomers and dimers. Phosphorylated by Toxoplasma gondii ROP18. As to expression, expressed in thymus and lymph nodes, predominantly T-cells. Not expressed by immature CD4(+) CD8(+) thymocytes (at protein level). Expressed in IFNG-stimulated macrophages. Expressed at low levels in unstimulated astrocytes. Due to sequence similarity with Tgtp2, it is impossible to assign unambiguously experimental data published in the literature to Tgtp1 or Tgtp2 gene.

The protein localises to the cytoplasm. Its subcellular location is the endoplasmic reticulum. The protein resides in the golgi apparatus. It is found in the parasitophorous vacuole membrane. The enzyme catalyses GTP + H2O = GDP + phosphate + H(+). Functionally, involved in innate cell-autonomous resistance to intracellular pathogens, such as Toxoplasma gondii. During avirulent type II T.gondii infection, recruited to the parasitophorous vacuole (PV) membrane, leading to PV vesiculation and rupture, and subsequent digestion of the parasite within the cytosol. Not recruited to virulent type I T.gondii PV membrane. May confer an antiviral state for vesicular stomatitis virus. The chain is T-cell-specific guanine nucleotide triphosphate-binding protein 1 (Tgtp1) from Mus musculus (Mouse).